The sequence spans 1143 residues: Disease resistance protein Piks-1 (1143 aa).

Residues Met-1 to Gln-190 are structured coiled coil (CC) domain. Residues Met-189–Val-258 form the HMA domain. The tract at residues Lys-191–Asp-264 is HMA-like domain. Residues His-282–Glu-570 enclose the NB-ARC domain. LRR repeat units follow at residues Phe-681–Gln-706, Ser-708–Leu-731, Lys-732–Leu-754, His-756–Leu-777, Gln-778–Leu-800, Asn-802–Leu-823, Asn-824–Gln-848, Met-945–Thr-968, Asp-979–Phe-1002, and Ala-1004–Cys-1027.

Belongs to the disease resistance NB-LRR family. As to quaternary structure, interacts with AVR-Pik through its N-terminal part containing the HMA-like domain.

Functionally, disease resistance (R) protein that specifically recognizes the AVR-Pik effector avirulence protein from M.oryzae. Resistance proteins guard the plant against pathogens that contain an appropriate avirulence protein via an indirect interaction with this avirulence protein. That triggers a defense system including the hypersensitive response, which restricts the pathogen growth. This chain is Disease resistance protein Piks-1, found in Oryza sativa subsp. japonica (Rice).